The primary structure comprises 519 residues: 3-octaprenyl-4-hydroxybenzoate carboxy-lyase (519 aa).

N177 contributes to the Mn(2+) binding site. Prenylated FMN is bound by residues 180 to 182, 194 to 196, and 199 to 200; these read IYR, RWL, and RG. E243 is a binding site for Mn(2+). Residue D318 is the Proton donor of the active site.

This sequence belongs to the UbiD family. In terms of assembly, homohexamer. It depends on prenylated FMN as a cofactor. The cofactor is Mn(2+).

The protein localises to the cell membrane. The catalysed reaction is a 4-hydroxy-3-(all-trans-polyprenyl)benzoate + H(+) = a 2-(all-trans-polyprenyl)phenol + CO2. The protein operates within cofactor biosynthesis; ubiquinone biosynthesis. Functionally, catalyzes the decarboxylation of 3-octaprenyl-4-hydroxy benzoate to 2-octaprenylphenol, an intermediate step in ubiquinone biosynthesis. This chain is 3-octaprenyl-4-hydroxybenzoate carboxy-lyase, found in Burkholderia thailandensis (strain ATCC 700388 / DSM 13276 / CCUG 48851 / CIP 106301 / E264).